The primary structure comprises 458 residues: Zinc finger protein 19 (458 aa).

The 72-residue stretch at 14-85 folds into the KRAB domain; it reads VTFEDVAVHF…EAQDDPPAER (72 aa). C2H2-type zinc fingers lie at residues 161 to 183, 189 to 211, 217 to 239, 245 to 267, 273 to 295, 301 to 323, 329 to 351, 357 to 379, and 385 to 407; these read FICEECGKSFSYFSYYARHQRIH, FECSECGKAFNGNSSLIRHQRIH, YQCEECGRAFNDNANLIRHQRIH, YYCTECGNSFTSSSEFVIHQRIH, YECNECGKAFVGNSPLLRHQKIH, YECNECGKSFGRTSHLSQHQRIH, YSCKVCGQAFNFHTKLTRHQRIH, FDCVDCGKAFSAQEQLKRHLRIH, and YVCDECGKALTSKRNLHQHQRIH. The segment at 413-433 adopts a C2H2-type 10; atypical zinc-finger fold; the sequence is YECSKYEKAFGTSSQLGHLEH.

Belongs to the krueppel C2H2-type zinc-finger protein family.

Its subcellular location is the nucleus. May be involved in transcriptional regulation. The protein is Zinc finger protein 19 (ZNF19) of Homo sapiens (Human).